The chain runs to 2692 residues: Thyroglobulin (2692 aa).

The first 19 residues, 1–19 (MALALWVFALLGSACLVSA), serve as a signal peptide directing secretion. Position 24 is an iodotyrosine; alternate (Tyr-24). Tyr-24 is modified (sulfotyrosine; alternate). Tyr-24 carries the post-translational modification Thyroxine; alternate. Residue Tyr-24 is modified to Triiodothyronine; alternate. Thyroglobulin type-1 domains follow at residues 31 to 92 (LRPC…PVAC), 93 to 160 (LSFC…PARC), and 161 to 248 (PGSC…LAGT). 8 disulfide bridges follow: Cys-34/Cys-52, Cys-63/Cys-70, Cys-72/Cys-92, Cys-96/Cys-120, Cys-131/Cys-138, Cys-140/Cys-160, Cys-164/Cys-183, and Cys-194/Cys-235. An Iodotyrosine modification is found at Tyr-108. A glycan (N-linked (GlcNAc...) asparagine) is linked at Asn-110. The residue at position 149 (Tyr-149) is an Iodotyrosine; alternate. At Tyr-149 the chain carries Diiodotyrosine; alternate. N-linked (GlcNAc...) asparagine glycosylation occurs at Asn-198. 2 positions are modified to iodotyrosine: Tyr-234 and Tyr-258. The Thyroglobulin type-1 4 domain occupies 298-358 (PTKCEVERFA…TRRPSEPLSC (61 aa)). 9 disulfide bridges follow: Cys-301–Cys-319, Cys-330–Cys-336, Cys-338–Cys-358, Cys-364–Cys-621, Cys-408–Cys-609, Cys-632–Cys-637, Cys-639–Cys-659, Cys-663–Cys-688, and Cys-699–Cys-704. 3 N-linked (GlcNAc...) asparagine glycosylation sites follow: Asn-485, Asn-497, and Asn-546. 3 consecutive Thyroglobulin type-1 domains span residues 606–659 (SQGC…RPRC), 660–727 (PTAC…PKQC), and 728–923 (PTPC…VPAC). Residue Tyr-705 is modified to Iodotyrosine; alternate. The residue at position 705 (Tyr-705) is a Thyroxine; alternate. Tyr-705 bears the Triiodothyronine; alternate mark. Tyr-705 carries the diiodotyrosine; alternate modification. 13 cysteine pairs are disulfide-bonded: Cys-706–Cys-727, Cys-731–Cys-764, Cys-775–Cys-900, Cys-902–Cys-923, Cys-927–Cys-1033, Cys-1044–Cys-1051, Cys-1053–Cys-1079, Cys-1128–Cys-1147, Cys-1151–Cys-1171, Cys-1183–Cys-1190, Cys-1192–Cys-1212, Cys-1237–Cys-1287, and Cys-1262–Cys-1278. N-linked (GlcNAc...) asparagine glycosylation is present at Asn-749. Tyr-786 bears the Iodotyrosine mark. An N-linked (GlcNAc...) asparagine glycan is attached at Asn-855. Tyr-868 is modified (iodotyrosine; alternate). A Diiodotyrosine; alternate modification is found at Tyr-868. Tyr-885 is subject to Diiodotyrosine. Asn-949 is a glycosylation site (N-linked (GlcNAc...) asparagine). Tyr-994 is subject to Iodotyrosine; alternate. Diiodotyrosine; alternate is present on Tyr-994. Thyroglobulin type-1 domains are found at residues 1021-1079 (SGPL…PTPC), 1088-1147 (LSAW…SAPC), and 1148-1212 (PGLC…QPAC). N-linked (GlcNAc...) asparagine glycosylation occurs at Asn-1142. Residue Tyr-1241 is modified to Iodotyrosine. Tyr-1241 bears the Thyroxine mark. N-linked (GlcNAc...) asparagine glycosylation is found at Asn-1296 and Asn-1384. 13 disulfide bridges follow: Cys-1372–Cys-1392, Cys-1395–Cys-1406, Cys-1409–Cys-1423, Cys-1426–Cys-1443, Cys-1447–Cys-1456, Cys-1476–Cys-1498, Cys-1535–Cys-1559, Cys-1539–Cys-1545, Cys-1571–Cys-1594, Cys-1656–Cys-1681, Cys-1660–Cys-1666, Cys-1665–Cys-1766, and Cys-1692–Cys-1709. Type II repeat units follow at residues 1389-1402 (PLGC…SYFQ), 1403-1419 (EEQC…EQTG), and 1420-1436 (SLAC…TSVG). Position 1400 is an iodotyrosine; alternate (Tyr-1400). At Tyr-1400 the chain carries Diiodotyrosine; alternate. One can recognise a Thyroglobulin type-1 11 domain in the interval 1444 to 1498 (VTACQRDEAGLQCDQDGQYRASQRDRASGKAFCVDSEGRRLPWSETQAPLVDAQC). The Type IIIA repeat unit spans residues 1535-1655 (CLADCARDEA…GASLTEAHLF (121 aa)). A Type IIIB repeat occupies 1656 to 1823 (CLLACDRDSC…LFSLQQAHLW (168 aa)). Residue Asn-1800 is glycosylated (N-linked (GlcNAc...) asparagine). 10 cysteine pairs are disulfide-bonded: Cys-1824/Cys-1850, Cys-1828/Cys-1835, Cys-1859/Cys-1870, Cys-1927/Cys-1955, Cys-1931/Cys-1937, Cys-1936/Cys-2007, Cys-1966/Cys-1979, Cys-2061/Cys-2085, Cys-2065/Cys-2071, and Cys-2094/Cys-2103. Residues 1824–1926 (CLSRCVQEPS…DKAISSGFFE (103 aa)) form a Type IIIA repeat. A Type IIIB repeat occupies 1927–2060 (CERLCDVDPC…VGDFSAARER (134 aa)). N-linked (GlcNAc...) asparagine glycosylation is present at Asn-1944. A Type IIIA repeat occupies 2061–2118 (CLLECSRHQACLVTTLQTRPGAVRCMFYADTQSCTHSLQAQNCQLLLREEATHIYRKP). The residue at position 2115 (Tyr-2115) is an Iodotyrosine. Positions 2119–2692 (DIPLPGLGSS…PELASKSYSK (574 aa)) are cholinesterase-like (ChEL). Asn-2181 and Asn-2226 each carry an N-linked (GlcNAc...) asparagine glycan. Position 2467 is a thyroxine (Tyr-2467). Tyr-2500 carries the post-translational modification Iodotyrosine; alternate. Tyr-2500 bears the Thyroxine; alternate mark. Tyr-2500 bears the Triiodothyronine; alternate mark. Position 2500 is a diiodotyrosine; alternate (Tyr-2500). Iodotyrosine is present on residues Tyr-2514 and Tyr-2544. A disulfide bridge connects residues Cys-2518 and Cys-2642. Tyr-2624 bears the Diiodotyrosine mark. Over residues 2658–2671 (EAEDGPLAESEEED) the composition is skewed to acidic residues. The segment at 2658 to 2692 (EAEDGPLAESEEEDRPGLTEDLLGLPELASKSYSK) is disordered. Iodotyrosine; alternate is present on Tyr-2690. Position 2690 is a thyroxine; alternate (Tyr-2690). Triiodothyronine; alternate is present on Tyr-2690. Residue Tyr-2690 is modified to Diiodotyrosine; alternate.

Belongs to the type-B carboxylesterase/lipase family. Monomer. Homodimer (via ChEL region); occurs in the endoplasmic reticulum and is required for export to the Golgi apparatus. Homooligomer; disulfide-linked; stored in this form in the thyroid follicle lumen. Post-translationally, iodinated on tyrosine residues by TPO. There are 4 pairs of iodinated tyrosines used for coupling: acceptor Tyr-24 is coupled to donor Tyr-149 or Tyr-234, acceptor Tyr-2500 is coupled to donor Tyr-2467, acceptor Tyr-2690 in monomer 1 is coupled to donor Tyr-2690 in monomer 2 and acceptor Tyr-1241 in monomer 1 is coupled to donor Tyr-108 in monomer 2. In terms of processing, sulfated tyrosines are desulfated during iodination. Undergoes sequential proteolysis by cathepsins to release thyroxine (T4) and triiodothyronine (T3) hormones. In the thyroid follicle lumen, cross-linked TG (storage form) is solubilized by limited proteolysis mediated by cathepsins CTSB and/or CTSL. Partially cleaved TG is further processed by CTSK/cathepsin K and/or CTSL resulting in the release of T4. Following endocytosis, further processing occurs leading to the release of T3 and more T4 hormones. In terms of tissue distribution, expressed in thyroid epithelial cells.

The protein resides in the secreted. In terms of biological role, acts as a substrate for the production of iodinated thyroid hormones thyroxine (T4) and triiodothyronine (T3). The synthesis of T3 and T4 involves iodination of selected tyrosine residues of TG/thyroglobulin followed by their oxidative coupling. Following TG re-internalization and lysosomal-mediated proteolysis, T3 and T4 are released from the polypeptide backbone leading to their secretion into the bloodstream. One dimer produces 7 thyroid hormone molecules. The chain is Thyroglobulin from Sus scrofa (Pig).